A 182-amino-acid polypeptide reads, in one-letter code: Crossover junction endodeoxyribonuclease RuvC (182 aa).

Active-site residues include D7, E69, and D141. Mg(2+) is bound by residues D7, E69, and D141.

This sequence belongs to the RuvC family. In terms of assembly, homodimer which binds Holliday junction (HJ) DNA. The HJ becomes 2-fold symmetrical on binding to RuvC with unstacked arms; it has a different conformation from HJ DNA in complex with RuvA. In the full resolvosome a probable DNA-RuvA(4)-RuvB(12)-RuvC(2) complex forms which resolves the HJ. Mg(2+) serves as cofactor.

Its subcellular location is the cytoplasm. It carries out the reaction Endonucleolytic cleavage at a junction such as a reciprocal single-stranded crossover between two homologous DNA duplexes (Holliday junction).. The RuvA-RuvB-RuvC complex processes Holliday junction (HJ) DNA during genetic recombination and DNA repair. Endonuclease that resolves HJ intermediates. Cleaves cruciform DNA by making single-stranded nicks across the HJ at symmetrical positions within the homologous arms, yielding a 5'-phosphate and a 3'-hydroxyl group; requires a central core of homology in the junction. The consensus cleavage sequence is 5'-(A/T)TT(C/G)-3'. Cleavage occurs on the 3'-side of the TT dinucleotide at the point of strand exchange. HJ branch migration catalyzed by RuvA-RuvB allows RuvC to scan DNA until it finds its consensus sequence, where it cleaves and resolves the cruciform DNA. This is Crossover junction endodeoxyribonuclease RuvC from Delftia acidovorans (strain DSM 14801 / SPH-1).